Consider the following 547-residue polypeptide: Probable pectinesterase/pectinesterase inhibitor 12 (547 aa).

The signal sequence occupies residues 1–23; that stretch reads MALSSFNLSSLLFLLFFTPSVFS. Residues 31 to 185 form a pectinesterase inhibitor 12 region; it reads NPHETSATSF…YKHISNSLSA (155 aa). 4 N-linked (GlcNAc...) asparagine glycosylation sites follow: asparagine 131, asparagine 247, asparagine 260, and asparagine 303. Residues 237–533 form a pectinesterase 12 region; the sequence is SLVVAADGTG…FTATEFITGD (297 aa). Substrate contacts are provided by threonine 312 and glutamine 342. Aspartate 365 acts as the Proton donor; for pectinesterase activity in catalysis. A disulfide bridge links cysteine 379 with cysteine 399. Aspartate 386 acts as the Nucleophile; for pectinesterase activity in catalysis. N-linked (GlcNAc...) asparagine glycosylation is found at asparagine 432 and asparagine 443. Residues arginine 454 and tryptophan 456 each coordinate substrate. Asparagine 523 carries N-linked (GlcNAc...) asparagine glycosylation.

This sequence in the N-terminal section; belongs to the PMEI family. The protein in the C-terminal section; belongs to the pectinesterase family. As to expression, expressed in siliques.

Its subcellular location is the secreted. The protein localises to the cell wall. The enzyme catalyses [(1-&gt;4)-alpha-D-galacturonosyl methyl ester](n) + n H2O = [(1-&gt;4)-alpha-D-galacturonosyl](n) + n methanol + n H(+). It functions in the pathway glycan metabolism; pectin degradation; 2-dehydro-3-deoxy-D-gluconate from pectin: step 1/5. Its function is as follows. Acts in the modification of cell walls via demethylesterification of cell wall pectin. This Arabidopsis thaliana (Mouse-ear cress) protein is Probable pectinesterase/pectinesterase inhibitor 12 (PME12).